The chain runs to 750 residues: NAD(P)H-quinone oxidoreductase subunit 5, chloroplastic (750 aa).

Helical transmembrane passes span Trp9–Phe29, Trp40–Ile60, Ile89–Ile109, Phe125–Ile145, Ile147–Thr167, Gly185–Phe205, Asn219–Ala239, Thr258–Ala278, Leu280–Ile300, Leu327–Ile347, Ala354–Ser374, Thr396–Ser416, Trp425–Tyr445, Phe554–Ser574, Phe607–Phe627, and Tyr728–Thr748.

The protein belongs to the complex I subunit 5 family. As to quaternary structure, NDH is composed of at least 16 different subunits, 5 of which are encoded in the nucleus.

Its subcellular location is the plastid. The protein resides in the chloroplast thylakoid membrane. The enzyme catalyses a plastoquinone + NADH + (n+1) H(+)(in) = a plastoquinol + NAD(+) + n H(+)(out). It catalyses the reaction a plastoquinone + NADPH + (n+1) H(+)(in) = a plastoquinol + NADP(+) + n H(+)(out). NDH shuttles electrons from NAD(P)H:plastoquinone, via FMN and iron-sulfur (Fe-S) centers, to quinones in the photosynthetic chain and possibly in a chloroplast respiratory chain. The immediate electron acceptor for the enzyme in this species is believed to be plastoquinone. Couples the redox reaction to proton translocation, and thus conserves the redox energy in a proton gradient. The polypeptide is NAD(P)H-quinone oxidoreductase subunit 5, chloroplastic (ndhF) (Glycine max (Soybean)).